Reading from the N-terminus, the 432-residue chain is Enolase (432 aa).

A (2R)-2-phosphoglycerate-binding site is contributed by Q167. E209 serves as the catalytic Proton donor. Mg(2+) contacts are provided by D246, E290, and D317. (2R)-2-phosphoglycerate is bound by residues K342, R371, S372, and K393. Catalysis depends on K342, which acts as the Proton acceptor.

The protein belongs to the enolase family. As to quaternary structure, component of the RNA degradosome, a multiprotein complex involved in RNA processing and mRNA degradation. It depends on Mg(2+) as a cofactor.

The protein localises to the cytoplasm. It is found in the secreted. The protein resides in the cell surface. It catalyses the reaction (2R)-2-phosphoglycerate = phosphoenolpyruvate + H2O. It functions in the pathway carbohydrate degradation; glycolysis; pyruvate from D-glyceraldehyde 3-phosphate: step 4/5. Catalyzes the reversible conversion of 2-phosphoglycerate (2-PG) into phosphoenolpyruvate (PEP). It is essential for the degradation of carbohydrates via glycolysis. The protein is Enolase of Cronobacter sakazakii (strain ATCC BAA-894) (Enterobacter sakazakii).